A 58-amino-acid chain; its full sequence is Alpha-conotoxin AuIB (58 aa).

An N-terminal signal peptide occupies residues 1–16 (MFTVFLLVVLATTVVS). Residues 17 to 39 (FTSDRASDGRKDAASGLIALTMK) constitute a propeptide that is removed on maturation. 2 disulfide bridges follow: cysteine 41-cysteine 47 and cysteine 42-cysteine 54. Cysteine 54 carries the post-translational modification Cysteine amide.

In terms of tissue distribution, expressed by the venom duct.

Its subcellular location is the secreted. Functionally, alpha-conotoxins act on postsynaptic membranes, they bind to the nicotinic acetylcholine receptors (nAChR) and thus inhibit them. This toxin blocks mammalian nAChR alpha-3-beta-4/CHRNA3-CHRNB4 subunits. Also exhibits inhibition of D.melanogaster alpha-7/CHRNA7 nAChRs. In Conus aulicus (Princely cone), this protein is Alpha-conotoxin AuIB.